Consider the following 318-residue polypeptide: Probable serine/threonine-protein kinase MRK1 homolog (318 aa).

Positions tyrosine 40 to phenylalanine 313 constitute a Protein kinase domain. Residues isoleucine 46–valine 54 and lysine 68 contribute to the ATP site. The Proton acceptor role is filled by aspartate 159.

It belongs to the protein kinase superfamily. CMGC Ser/Thr protein kinase family. GSK-3 subfamily.

It is found in the cytoplasm. The protein resides in the nucleus. The catalysed reaction is L-seryl-[protein] + ATP = O-phospho-L-seryl-[protein] + ADP + H(+). It catalyses the reaction L-threonyl-[protein] + ATP = O-phospho-L-threonyl-[protein] + ADP + H(+). Its function is as follows. May play a role in the initiation and completion of mitosis. This Encephalitozoon cuniculi (strain GB-M1) (Microsporidian parasite) protein is Probable serine/threonine-protein kinase MRK1 homolog (MRK1).